Here is a 107-residue protein sequence, read N- to C-terminus: Ferredoxin-1 (107 aa).

4Fe-4S ferredoxin-type domains follow at residues 2-30 and 31-60; these read AFVV…YEGP and NFLV…SEDE. Positions 9 and 17 each coordinate [3Fe-4S] cluster. [4Fe-4S] cluster contacts are provided by cysteine 21, cysteine 40, cysteine 43, and cysteine 46. Cysteine 50 provides a ligand contact to [3Fe-4S] cluster. The tract at residues 84-107 is disordered; sequence EKKDPLPDAEDWDGVKGKLQHLER. Over residues 96–107 the composition is skewed to basic and acidic residues; that stretch reads DGVKGKLQHLER.

Requires [4Fe-4S] cluster as cofactor. [3Fe-4S] cluster is required as a cofactor.

In terms of biological role, ferredoxins are iron-sulfur proteins that transfer electrons in a wide variety of metabolic reactions. This ferredoxin could play a role in regulating gene expression by interacting directly with DNA. The sequence is that of Ferredoxin-1 (fdxA) from Azotobacter vinelandii.